The chain runs to 83 residues: Protein Vpu (83 aa).

Residues M1–L4 are Extracellular-facing. Residues G5–R25 traverse the membrane as a helical segment. At E26–V83 the chain is on the cytoplasmic side. Phosphoserine; by host CK2 is present on residues S50 and S54.

It belongs to the HIV-1 VPU protein family. In terms of assembly, homopentamer. Interacts with host CD4 and BRTC; these interactions induce proteasomal degradation of CD4. Interacts with host BST2; this interaction leads to the degradation of host BST2. Interacts with host FBXW11. Interacts with host AP1M1; this interaction plays a role in the mistrafficking and subsequent degradation of host BST2. Interacts with host RANBP2; this interaction allows Vpu to down-regulate host BLM sumoylation. In terms of processing, phosphorylated by host CK2. This phosphorylation is necessary for interaction with human BTRC and degradation of CD4.

It is found in the host membrane. Its activity is regulated as follows. Ion channel activity is inhibited by hexamethylene amiloride in vitro. Functionally, enhances virion budding by targeting host CD4 and Tetherin/BST2 to proteasome degradation. Degradation of CD4 prevents any unwanted premature interactions between viral Env and its host receptor CD4 in the endoplasmic reticulum. Degradation of antiretroviral protein Tetherin/BST2 is important for virion budding, as BST2 tethers new viral particles to the host cell membrane. Mechanistically, Vpu bridges either CD4 or BST2 to BTRC, a substrate recognition subunit of the Skp1/Cullin/F-box protein E3 ubiquitin ligase, induces their ubiquitination and subsequent proteasomal degradation. The alteration of the E3 ligase specificity by Vpu seems to promote the degradation of host IKBKB, leading to NF-kappa-B down-regulation and subsequent apoptosis. Acts as a viroporin that forms an oligomeric ion channel in membranes. Modulates the host DNA repair mechanisms to promote degradation of nuclear viral cDNA in cells that are already productively infected in order to suppress immune sensing and proviral hyper-integration (superinfection). Manipulates PML-NBs and modulates SUMOylation of host BLM protein thereby enhancing its DNA-end processing activity toward viral unintegrated linear DNA. Also inhibits RAD52-mediated homologous repair of viral cDNA, preventing the generation of dead-end circular forms of single copies of the long terminal repeat and permitting sustained nucleolytic attack. The polypeptide is Protein Vpu (Human immunodeficiency virus type 1 group N (isolate YBF30) (HIV-1)).